A 45-amino-acid polypeptide reads, in one-letter code: FREIKGYEYQLYVYASDKLFRADISEDYKTRGRKLLRFNGPVPPP.

In terms of assembly, heterodimer of an A chain and a B chain.

Taste-modifying protein; intensely sweet-tasting protein. The sequence is that of Monellin chain A from Dioscoreophyllum cumminsii (Serendipity berry).